The following is a 200-amino-acid chain: ATP synthase subunit b (200 aa).

A helical transmembrane segment spans residues 12 to 32 (ILSGLAVAVAILVPVLALASG).

This sequence belongs to the ATPase B chain family. In terms of assembly, F-type ATPases have 2 components, F(1) - the catalytic core - and F(0) - the membrane proton channel. F(1) has five subunits: alpha(3), beta(3), gamma(1), delta(1), epsilon(1). F(0) has three main subunits: a(1), b(2) and c(10-14). The alpha and beta chains form an alternating ring which encloses part of the gamma chain. F(1) is attached to F(0) by a central stalk formed by the gamma and epsilon chains, while a peripheral stalk is formed by the delta and b chains.

It is found in the cell inner membrane. Its function is as follows. F(1)F(0) ATP synthase produces ATP from ADP in the presence of a proton or sodium gradient. F-type ATPases consist of two structural domains, F(1) containing the extramembraneous catalytic core and F(0) containing the membrane proton channel, linked together by a central stalk and a peripheral stalk. During catalysis, ATP synthesis in the catalytic domain of F(1) is coupled via a rotary mechanism of the central stalk subunits to proton translocation. Component of the F(0) channel, it forms part of the peripheral stalk, linking F(1) to F(0). The chain is ATP synthase subunit b from Trichlorobacter lovleyi (strain ATCC BAA-1151 / DSM 17278 / SZ) (Geobacter lovleyi).